Reading from the N-terminus, the 689-residue chain is Armadillo-like helical domain-containing protein 3 (689 aa).

The chain crosses the membrane as a helical span at residues 520–538 (IFTLALMIVNLFNMFITYG).

The protein belongs to the ARMH3 family. In terms of assembly, interacts with PI4KB. Interacts with GBF1.

Its subcellular location is the golgi apparatus membrane. It localises to the cytoplasm. Functionally, involved in GBF1 recruitment, Golgi maintenance and protein secretion. This is Armadillo-like helical domain-containing protein 3 from Homo sapiens (Human).